Consider the following 217-residue polypeptide: 3,4-dihydroxy-2-butanone 4-phosphate synthase (217 aa).

Residues 37–38 (RE), aspartate 42, 150–154 (RRGHT), and glutamate 174 each bind D-ribulose 5-phosphate. Glutamate 38 contacts Mg(2+). Mg(2+) is bound at residue histidine 153.

Belongs to the DHBP synthase family. As to quaternary structure, homodimer. Requires Mg(2+) as cofactor. It depends on Mn(2+) as a cofactor.

The catalysed reaction is D-ribulose 5-phosphate = (2S)-2-hydroxy-3-oxobutyl phosphate + formate + H(+). Its pathway is cofactor biosynthesis; riboflavin biosynthesis; 2-hydroxy-3-oxobutyl phosphate from D-ribulose 5-phosphate: step 1/1. In terms of biological role, catalyzes the conversion of D-ribulose 5-phosphate to formate and 3,4-dihydroxy-2-butanone 4-phosphate. This Shewanella baltica (strain OS223) protein is 3,4-dihydroxy-2-butanone 4-phosphate synthase.